Here is a 583-residue protein sequence, read N- to C-terminus: Propane 2-monooxygenase operon transcriptional activator MimR (583 aa).

The region spanning L320–R513 is the Sigma-54 factor interaction domain. Residues E349–Y356 and S395–D404 each bind ATP.

Its function is as follows. Acts as a transcriptional activator of the mimABCD operon encoding the propane 2-monooxygenase complex. The sequence is that of Propane 2-monooxygenase operon transcriptional activator MimR from Mycolicibacterium smegmatis (strain ATCC 700084 / mc(2)155) (Mycobacterium smegmatis).